A 502-amino-acid chain; its full sequence is Lysine--tRNA ligase (502 aa).

Mg(2+) contacts are provided by glutamate 412 and glutamate 419.

It belongs to the class-II aminoacyl-tRNA synthetase family. As to quaternary structure, homodimer. Mg(2+) is required as a cofactor.

The protein localises to the cytoplasm. It catalyses the reaction tRNA(Lys) + L-lysine + ATP = L-lysyl-tRNA(Lys) + AMP + diphosphate. The protein is Lysine--tRNA ligase of Histophilus somni (strain 2336) (Haemophilus somnus).